Reading from the N-terminus, the 656-residue chain is DNA ligase (656 aa).

NAD(+) is bound by residues 32–36 and 81–82; these read DAVYD and SL. The active-site N6-AMP-lysine intermediate is the Lys112. Arg133, Glu167, and Lys306 together coordinate NAD(+). Cys400, Cys403, Cys416, and Cys421 together coordinate Zn(2+). The BRCT domain maps to 577 to 656; the sequence is ESSSVFSNKT…ELLKRLKEFD (80 aa).

Belongs to the NAD-dependent DNA ligase family. LigA subfamily. Mg(2+) is required as a cofactor. Mn(2+) serves as cofactor.

The catalysed reaction is NAD(+) + (deoxyribonucleotide)n-3'-hydroxyl + 5'-phospho-(deoxyribonucleotide)m = (deoxyribonucleotide)n+m + AMP + beta-nicotinamide D-nucleotide.. DNA ligase that catalyzes the formation of phosphodiester linkages between 5'-phosphoryl and 3'-hydroxyl groups in double-stranded DNA using NAD as a coenzyme and as the energy source for the reaction. It is essential for DNA replication and repair of damaged DNA. The polypeptide is DNA ligase (Helicobacter pylori (strain Shi470)).